A 426-amino-acid polypeptide reads, in one-letter code: Glutamyl-tRNA reductase (426 aa).

Substrate contacts are provided by residues 49 to 52 (TCNR), S109, 114 to 116 (EGQ), and Q120. C50 functions as the Nucleophile in the catalytic mechanism. NADP(+) is bound at residue 189 to 194 (GAGETG).

The protein belongs to the glutamyl-tRNA reductase family. Homodimer.

The catalysed reaction is (S)-4-amino-5-oxopentanoate + tRNA(Glu) + NADP(+) = L-glutamyl-tRNA(Glu) + NADPH + H(+). It functions in the pathway porphyrin-containing compound metabolism; protoporphyrin-IX biosynthesis; 5-aminolevulinate from L-glutamyl-tRNA(Glu): step 1/2. Catalyzes the NADPH-dependent reduction of glutamyl-tRNA(Glu) to glutamate 1-semialdehyde (GSA). This chain is Glutamyl-tRNA reductase (hemA), found in Chlorobaculum parvum (strain DSM 263 / NCIMB 8327) (Chlorobium vibrioforme subsp. thiosulfatophilum).